The following is a 1678-amino-acid chain: Clathrin heavy chain (1678 aa).

7 WD40-like repeat regions span residues 24–67 (SFSF…RPIS), 68–107 (ADSAIMNPASKVIALKAQKTLQIFNIEMKSKMKAHTMNED), 108–149 (VVFW…SSLN), 150–195 (GCQI…QAIE), 196–257 (GHAA…PEAQ), 258–301 (NDFP…ISAD), and 302–330 (TIFVTAPHEASGGIIGVNRKGQVLSVTVD). CHCR repeat units follow at residues 538-684 (VAEE…QICV), 687-829 (ATKY…SEDI), 834-973 (ILVV…QLID), 980-1125 (LSET…VKEA), 1129-1270 (YIKA…FRLA), 1275-1421 (LHIV…LLLN), and 1424-1567 (LLVL…YDCF). Residues 1334-1643 (REHLELFWSR…IQMEPQLMIT (310 aa)) form an involved in binding clathrin light chain region. The interval 1552-1677 (EELLGWFLER…AGGRNMGYPY (126 aa)) is trimerization.

Belongs to the clathrin heavy chain family. As to quaternary structure, clathrin triskelions, composed of 3 heavy chains and 3 light chains, are the basic subunits of the clathrin coat. Interacts with sau.

Its subcellular location is the cytoplasmic vesicle membrane. It is found in the membrane. It localises to the coated pit. Clathrin is the major protein of the polyhedral coat of coated pits and vesicles. This is Clathrin heavy chain (Chc) from Drosophila melanogaster (Fruit fly).